A 264-amino-acid chain; its full sequence is Exosome complex component Rrp4 (264 aa).

Residues 65-137 (GDNVLGKIVD…EVNNIELTTK (73 aa)) enclose the S1 motif domain. The KH domain maps to 147-206 (RGGQIIKITSSKVPRVIGKGGSMINMIKKLTQSRIIVGQNGWIWISSKNPELEKLAIEAI). Acidic residues predominate over residues 244 to 258 (SLEEETQEETVMEND). The interval 244-264 (SLEEETQEETVMENDVEARGP) is disordered.

This sequence belongs to the RRP4 family. As to quaternary structure, component of the archaeal exosome complex. Forms a trimer of Rrp4 and/or Csl4 subunits. The trimer associates with a hexameric ring-like arrangement composed of 3 Rrp41-Rrp42 heterodimers.

It localises to the cytoplasm. Its function is as follows. Non-catalytic component of the exosome, which is a complex involved in RNA degradation. Increases the RNA binding and the efficiency of RNA degradation. Confers strong poly(A) specificity to the exosome. The chain is Exosome complex component Rrp4 from Pyrococcus furiosus (strain ATCC 43587 / DSM 3638 / JCM 8422 / Vc1).